The sequence spans 265 residues: UPF0354 protein GTNG_2723 (265 aa).

It belongs to the UPF0354 family.

The chain is UPF0354 protein GTNG_2723 from Geobacillus thermodenitrificans (strain NG80-2).